We begin with the raw amino-acid sequence, 163 residues long: MSQFDEKNKHIDVMGIRKILPHRYPFALLDKIVDWSIEDRTIVAHKNVTINEDFFNGHFPEFPVMPGVLIVEAMAQATAILGELMAETLFAHVVAKAGGGRRTFMLAGIDKVRVKRPVVPGDVLVIESRMVKQKNIICTAESVAKVDGQIVCSAELMAAYKDY.

The active site involves His-58.

Belongs to the thioester dehydratase family. FabZ subfamily.

It localises to the cytoplasm. It catalyses the reaction a (3R)-hydroxyacyl-[ACP] = a (2E)-enoyl-[ACP] + H2O. Its function is as follows. Involved in unsaturated fatty acids biosynthesis. Catalyzes the dehydration of short chain beta-hydroxyacyl-ACPs and long chain saturated and unsaturated beta-hydroxyacyl-ACPs. The chain is 3-hydroxyacyl-[acyl-carrier-protein] dehydratase FabZ from Francisella philomiragia subsp. philomiragia (strain ATCC 25017 / CCUG 19701 / FSC 153 / O#319-036).